We begin with the raw amino-acid sequence, 82 residues long: Delta-actitoxin-Aeq2a (82 aa).

The first 19 residues, 1–19 (MNRLMILVFAAVFLALASA), serve as a signal peptide directing secretion. The propeptide occupies 20-26 (DEDVDIA). 3 disulfides stabilise this stretch: C32-C79, C34-C69, and C62-C80.

This sequence belongs to the sea anemone sodium channel inhibitory toxin family. Type I subfamily.

The protein resides in the secreted. Its subcellular location is the nematocyst. In terms of biological role, binds specifically to voltage-gated sodium channels (Nav), thereby delaying their inactivation during signal transduction. Causes death to crabs (minimum lethal dose of 25 ug/kg) and mice. The sequence is that of Delta-actitoxin-Aeq2a from Actinia equina (Beadlet anemone).